The sequence spans 342 residues: uncharacterized protein (342 aa).

The next 3 membrane-spanning stretches (helical) occupy residues 35-55, 134-154, and 161-180; these read YFRVSLVLLTLLIISLVWCFS, LLFLPSSVLSLSLIFSLIIYF, and LFITRCNSTLYLFNIYYCFS. 2 disordered regions span residues 198-220 and 311-342; these read SSDNYSNYQQQPQQQPQQQQQYN and IINNNNNNNNNNNINNSAYSNFNNSNGYNYTN.

The protein localises to the membrane. This is an uncharacterized protein from Dictyostelium discoideum (Social amoeba).